Here is a 175-residue protein sequence, read N- to C-terminus: Putative metal-dependent hydrolase BPUM_0784 (175 aa).

Positions 65, 157, and 161 each coordinate Zn(2+).

This sequence belongs to the metal hydrolase YfiT family. In terms of assembly, homodimer. Zn(2+) serves as cofactor.

The protein localises to the cytoplasm. Its function is as follows. Possible metal-dependent hydrolase. In Bacillus pumilus (strain SAFR-032), this protein is Putative metal-dependent hydrolase BPUM_0784.